Here is a 434-residue protein sequence, read N- to C-terminus: Homogentisate 1,2-dioxygenase (434 aa).

His289 acts as the Proton acceptor in catalysis. 2 residues coordinate Fe cation: His332 and Glu338. Homogentisate is bound by residues Tyr347 and His368. His368 contacts Fe cation.

This sequence belongs to the homogentisate dioxygenase family. As to quaternary structure, hexamer; dimer of trimers. It depends on Fe cation as a cofactor.

It carries out the reaction homogentisate + O2 = 4-maleylacetoacetate + H(+). The protein operates within amino-acid degradation; L-phenylalanine degradation; acetoacetate and fumarate from L-phenylalanine: step 4/6. Functionally, involved in the catabolism of homogentisate (2,5-dihydroxyphenylacetate or 2,5-OH-PhAc), a central intermediate in the degradation of phenylalanine and tyrosine. Catalyzes the oxidative ring cleavage of the aromatic ring of homogentisate to yield maleylacetoacetate. This Pseudomonas syringae pv. tomato (strain ATCC BAA-871 / DC3000) protein is Homogentisate 1,2-dioxygenase.